The primary structure comprises 200 residues: GTP cyclohydrolase 1 (200 aa).

Positions 87, 90, and 158 each coordinate Zn(2+).

The protein belongs to the GTP cyclohydrolase I family. Toroid-shaped homodecamer, composed of two pentamers of five dimers.

It catalyses the reaction GTP + H2O = 7,8-dihydroneopterin 3'-triphosphate + formate + H(+). Its pathway is cofactor biosynthesis; 7,8-dihydroneopterin triphosphate biosynthesis; 7,8-dihydroneopterin triphosphate from GTP: step 1/1. This is GTP cyclohydrolase 1 from Xanthomonas campestris pv. campestris (strain ATCC 33913 / DSM 3586 / NCPPB 528 / LMG 568 / P 25).